The primary structure comprises 529 residues: Nucleolar protein 58 (529 aa).

Thr-34 carries the post-translational modification Phosphothreonine. Phosphoserine is present on Ser-109. The interval 155–400 is sufficient for interaction with NOPCHAP1; it reads ADKVDTMIVQ…LEARLRTLED (246 aa). Residue Lys-157 forms a Glycyl lysine isopeptide (Lys-Gly) (interchain with G-Cter in SUMO2) linkage. A Nop domain is found at 282 to 400; it reads IAPNVTVMVG…LEARLRTLED (119 aa). Phosphoserine occurs at positions 304 and 351. Glycyl lysine isopeptide (Lys-Gly) (interchain with G-Cter in SUMO2) cross-links involve residues Lys-353, Lys-411, Lys-415, Lys-422, Lys-426, Lys-441, Lys-444, and Lys-465. Residues 409 to 529 form a disordered region; the sequence is TGKALAKTEK…KKKKKRENED (121 aa). Basic and acidic residues predominate over residues 414 to 427; the sequence is AKTEKYEHKSEVKT. Lys-467 is covalently cross-linked (Glycyl lysine isopeptide (Lys-Gly) (interchain with G-Cter in SUMO); alternate). Residue Lys-467 forms a Glycyl lysine isopeptide (Lys-Gly) (interchain with G-Cter in SUMO1); alternate linkage. Residue Lys-467 forms a Glycyl lysine isopeptide (Lys-Gly) (interchain with G-Cter in SUMO2); alternate linkage. The span at 469-481 shows a compositional bias: acidic residues; sequence EEEEEEKVAEEEE. Ser-483 carries the post-translational modification Phosphoserine. Lys-485 is covalently cross-linked (Glycyl lysine isopeptide (Lys-Gly) (interchain with G-Cter in SUMO2)). Over residues 485–495 the composition is skewed to basic residues; it reads KKKKKRGKKKH. A Glycyl lysine isopeptide (Lys-Gly) (interchain with G-Cter in SUMO); alternate cross-link involves residue Lys-497. Lys-497 participates in a covalent cross-link: Glycyl lysine isopeptide (Lys-Gly) (interchain with G-Cter in SUMO2); alternate. Phosphoserine is present on residues Ser-502 and Ser-514. Positions 517–529 are enriched in basic residues; that stretch reads KKKKKKKKRENED.

This sequence belongs to the NOP5/NOP56 family. In terms of assembly, core component of box C/D small nucleolar ribonucleoprotein (snoRNP) particles; the core proteins SNU13, NOP56, NOP58 and FBL or FBLL1 assemble stepwise onto the snoRNA. Interacts with NOLC1/Nopp140. Interacts with NOPCHAP1, NUFIP1, RUVBL1 and RUVBL2; NOPCHAP1 bridges the association of NOP58 with RUVBL1:RUVBL2 and NUFIP1. Interacts with PIH1D1. Part of the small subunit (SSU) processome, composed of more than 70 proteins and the RNA chaperone small nucleolar RNA (snoRNA) U3. Sumoylation is essential for high-affinity binding to snoRNAs. Ubiquitous.

It localises to the nucleus. The protein localises to the nucleolus. Its subcellular location is the nucleoplasm. Required for the biogenesis of box C/D snoRNAs such as U3, U8 and U14 snoRNAs. Part of the small subunit (SSU) processome, first precursor of the small eukaryotic ribosomal subunit. During the assembly of the SSU processome in the nucleolus, many ribosome biogenesis factors, an RNA chaperone and ribosomal proteins associate with the nascent pre-rRNA and work in concert to generate RNA folding, modifications, rearrangements and cleavage as well as targeted degradation of pre-ribosomal RNA by the RNA exosome. Core component of box C/D small nucleolar ribonucleoprotein (snoRNP) complexes that function in methylation of multiple sites on ribosomal RNAs (rRNAs) and messenger RNAs (mRNAs). The protein is Nucleolar protein 58 of Homo sapiens (Human).